A 307-amino-acid chain; its full sequence is Lactamase-like protein vrtG (307 aa).

Residues histidine 97, histidine 99, aspartate 101, and histidine 102 each contribute to the Zn(2+) site. Aspartate 101 serves as the catalytic Proton donor/acceptor.

Belongs to the metallo-beta-lactamase superfamily. It depends on Zn(2+) as a cofactor.

It functions in the pathway secondary metabolite biosynthesis; terpenoid biosynthesis. Functionally, lactamase-like protein; part of the gene cluster that mediates the biosynthesis of viridicatumtoxin, a tetracycline-like fungal meroterpenoid with a unique, fused spirobicyclic ring system. The first step of the pathway is the production of the malonamoyl-CoA starter unit for the polyketide synthase vrtA. The aldolase vrtJ may be involved in the synthesis of the malonamate substrate for malonamoyl-CoA synthetase vrtB. The polyketide synthase vrtA then may utilize the malonamoyl-CoA starter unit, followed by sequential condensation of eight malonyl-CoA units to form the polyketide backbone. The cyclization of the last ring could be mediated by the lactamase-like protein vrtG. The proposed post-PKS tailoring steps are a hydroxylation at C5 catalyzed the cytochrome P450 monooxygenase vrtE, a hydroxylation at C12a catalyzed by VrtH and/or VrtI, and an O-methylation by the O-methyltransferase vrtF. VrtC is then proposed to catalyze the transfer of a geranyl group synthesized by vrtD to the aromatic C ring of the tetracyclic polyketide intermediate of viridicatumtoxin to yield previridicatumtoxin. Finally, the cytochrome P450 monooxygenase vrtK catalyzes the spirocyclization of the geranyl moiety of previridicatumtoxin to afford viridicatumtoxin. This chain is Lactamase-like protein vrtG, found in Penicillium aethiopicum.